Here is a 600-residue protein sequence, read N- to C-terminus: Isocitrate dehydrogenase kinase/phosphatase (600 aa).

ATP-binding positions include 335 to 341 and Lys-356; that span reads APGIRGM. Residue Asp-390 is part of the active site.

The protein belongs to the AceK family.

The protein localises to the cytoplasm. It catalyses the reaction L-seryl-[isocitrate dehydrogenase] + ATP = O-phospho-L-seryl-[isocitrate dehydrogenase] + ADP + H(+). Its function is as follows. Bifunctional enzyme which can phosphorylate or dephosphorylate isocitrate dehydrogenase (IDH) on a specific serine residue. This is a regulatory mechanism which enables bacteria to bypass the Krebs cycle via the glyoxylate shunt in response to the source of carbon. When bacteria are grown on glucose, IDH is fully active and unphosphorylated, but when grown on acetate or ethanol, the activity of IDH declines drastically concomitant with its phosphorylation. In Bordetella parapertussis (strain 12822 / ATCC BAA-587 / NCTC 13253), this protein is Isocitrate dehydrogenase kinase/phosphatase.